A 375-amino-acid polypeptide reads, in one-letter code: Homoserine O-succinyltransferase (375 aa).

The AB hydrolase-1 domain maps to 48–358 (NAVLVCHALS…PAGHDSFLLD (311 aa)). Serine 154 acts as the Nucleophile in catalysis. Arginine 224 serves as a coordination point for substrate. Residues aspartate 319 and histidine 352 contribute to the active site. Aspartate 353 contributes to the substrate binding site.

Belongs to the AB hydrolase superfamily. MetX family. As to quaternary structure, homodimer.

It is found in the cytoplasm. The enzyme catalyses L-homoserine + succinyl-CoA = O-succinyl-L-homoserine + CoA. Its pathway is amino-acid biosynthesis; L-methionine biosynthesis via de novo pathway; O-succinyl-L-homoserine from L-homoserine: step 1/1. In terms of biological role, transfers a succinyl group from succinyl-CoA to L-homoserine, forming succinyl-L-homoserine. The protein is Homoserine O-succinyltransferase of Azoarcus sp. (strain BH72).